The following is a 63-amino-acid chain: Translational regulator CsrA (63 aa).

Belongs to the CsrA/RsmA family. As to quaternary structure, homodimer; the beta-strands of each monomer intercalate to form a hydrophobic core, while the alpha-helices form wings that extend away from the core.

The protein resides in the cytoplasm. Functionally, a key translational regulator that binds mRNA to regulate translation initiation and/or mRNA stability. Mediates global changes in gene expression, shifting from rapid growth to stress survival by linking envelope stress, the stringent response and the catabolite repression systems. Usually binds in the 5'-UTR; binding at or near the Shine-Dalgarno sequence prevents ribosome-binding, repressing translation, binding elsewhere in the 5'-UTR can activate translation and/or stabilize the mRNA. Its function is antagonized by small RNA(s). The chain is Translational regulator CsrA from Haemophilus influenzae (strain 86-028NP).